Here is a 253-residue protein sequence, read N- to C-terminus: Chloride intracellular channel protein 4 (253 aa).

Position 2 is an N-acetylalanine (Ala-2). A required for insertion into the membrane region spans residues 2–101; the sequence is ALSMPLNGLK…EEFLEEVLCP (100 aa). Ser-4 bears the Phosphoserine mark. Lys-24 carries the N6-acetyllysine modification. Residues 37–57 form a helical membrane-spanning segment; sequence FSQRLFMILWLKGVVFSVSTV. One can recognise a GST C-terminal domain in the interval 81 to 244; sequence NSEVKTDVNK…PSDKEVEIAY (164 aa). Residue Lys-130 is modified to N6-acetyllysine. Phosphoserine occurs at positions 132, 167, and 236. Tyr-244 carries the phosphotyrosine modification.

This sequence belongs to the chloride channel CLIC family. Monomer. Interacts with HRH3.

It localises to the cytoplasm. The protein localises to the cytoskeleton. It is found in the microtubule organizing center. The protein resides in the centrosome. Its subcellular location is the cytoplasmic vesicle membrane. It localises to the nucleus. The protein localises to the cell membrane. It is found in the mitochondrion. The protein resides in the cell junction. The enzyme catalyses chloride(in) = chloride(out). The catalysed reaction is thiocyanate(in) = thiocyanate(out). It carries out the reaction nitrate(in) = nitrate(out). It catalyses the reaction iodide(out) = iodide(in). The enzyme catalyses bromide(in) = bromide(out). The catalysed reaction is fluoride(in) = fluoride(out). It carries out the reaction choline(out) = choline(in). In the soluble state, catalyzes glutaredoxin-like thiol disulfide exchange reactions with reduced glutathione as electron donor. Can insert into membranes and form voltage-dependent multi-ion conductive channels. Membrane insertion seems to be redox-regulated and may occur only under oxidizing conditions. Has alternate cellular functions like a potential role in angiogenesis or in maintaining apical-basolateral membrane polarity during mitosis and cytokinesis. Could also promote endothelial cell proliferation and regulate endothelial morphogenesis (tubulogenesis). Promotes cell-surface expression of HRH3. The sequence is that of Chloride intracellular channel protein 4 (CLIC4) from Pongo abelii (Sumatran orangutan).